The primary structure comprises 348 residues: Alcohol dehydrogenase 2 (348 aa).

Residue Ser2 is modified to N-acetylserine. Residues Cys44, His67, Cys98, Cys101, Cys104, Cys112, and Cys154 each coordinate Zn(2+). NAD(+) contacts are provided by residues Gly178–Gly184, Asp202, Lys207, Val269–Leu271, and Arg341.

This sequence belongs to the zinc-containing alcohol dehydrogenase family. As to quaternary structure, homotetramer. It depends on Zn(2+) as a cofactor.

The protein resides in the cytoplasm. The enzyme catalyses a primary alcohol + NAD(+) = an aldehyde + NADH + H(+). It carries out the reaction a secondary alcohol + NAD(+) = a ketone + NADH + H(+). This is Alcohol dehydrogenase 2 (ADH2) from Kluyveromyces marxianus (Yeast).